The following is a 326-amino-acid chain: NDRG-like protein (326 aa).

It belongs to the NDRG family.

This Dictyostelium discoideum (Social amoeba) protein is NDRG-like protein.